The primary structure comprises 2527 residues: Leucine-rich repeat serine/threonine-protein kinase 2 (2527 aa).

Residues 1 to 969 (MASGACQGCE…RSSRLPSHMR (969 aa)) are required for RAB29-mediated activation. A coiled-coil region spans residues 9–33 (CEEEEEEEALKKLIVRLNNVQEGKQ). Phosphoserine occurs at positions 910, 935, 955, and 973. Positions 957–979 (ESLRSSRLPSHMRQSDSSSSLAS) are disordered. Positions 961–978 (SSRLPSHMRQSDSSSSLA) are enriched in low complexity. LRR repeat units lie at residues 983-1004 (HITS…SQKC), 1012-1033 (HLTK…LCET), 1036-1057 (CLIH…VLKM), 1059-1080 (RITN…DPAM), 1084-1105 (SLKQ…LAQV), 1108-1129 (KLEQ…LSLK), 1130-1150 (ELKI…DFLE), 1156-1171 (ESFS…MPAL), 1174-1196 (SITS…FSLP), 1197-1218 (HLRS…AHWK), 1221-1245 (NLRE…HVWS), 1246-1267 (RVEK…IGCL), and 1269-1291 (NLTS…MGKL). The residue at position 1292 (serine 1292) is a Phosphoserine; by autocatalysis. The 184-residue stretch at 1328 to 1511 (KAVPYNRMKL…KTIINESLNF (184 aa)) folds into the Roc domain. 1341-1348 (GNTGSGKT) serves as a coordination point for GTP. Serine 1444 bears the Phosphoserine mark. The 198-residue stretch at 1543-1740 (TEFPVINRKH…RMYWRQGIYL (198 aa)) folds into the COR domain. The region spanning 1879 to 2146 (EAPEFLLGDG…LICLMRHILI (268 aa)) is the Protein kinase domain. 12 residues coordinate ATP: leucine 1885, aspartate 1887, glycine 1888, glycine 1891, valine 1893, alanine 1904, lysine 1906, methionine 1947, glutamate 1948, alanine 1950, serine 1954, and arginine 1957. The active-site Proton acceptor is aspartate 1994. ATP-binding residues include histidine 1998, leucine 2001, alanine 2016, and aspartate 2017. 2098–2121 (EYGCAPWPMVEKLITKCLKENPQE) serves as a coordination point for GTP. WD repeat units follow at residues 2139–2183 (CLMR…SLFD), 2188–2228 (RYSY…LVIN), 2233–2276 (TKRH…MIFE), 2281–2327 (KCKG…FSFS), 2333–2377 (QKLI…EVWD), 2402–2438 (KESK…LLLD), and 2443–2497 (RVIR…SIWD). Position 2295 to 2298 (2295 to 2298 (DVST)) interacts with GTP.

This sequence belongs to the protein kinase superfamily. TKL Ser/Thr protein kinase family. Homodimer. Homotetramer; when activated by GTP-bound RAB29. Interacts with PRKN, PRDX3 and TPCN2. Interacts with VPS35. Interacts (via N-terminus) with RAB29; this interaction is direct and stimulates kinase activity. Interacts (via ROC domain) with SEC16A. Interacts with APP; interaction promotes phosphorylation of 'Thr-743' of APP. Interacts with MAPT. Interacts with RAB8A, RAB10, and RAB12. Interacts (via N-terminus) with RAB32. Interacts with YWHAG; this interaction is dependent on phosphorylation of Ser-910 and either Ser-935 or Ser-1444. Interacts with SFN; this interaction is dependent on phosphorylation of Ser-910 and/or Ser-935. The cofactor is Mg(2+). Post-translationally, autophosphorylated at Ser-1292. Autophosphorylation is stimulated by RAB29. Phosphorylation of Ser-910 and Ser-935 or Ser-1444 facilitates interaction with YWHAG. Phosphorylation of Ser-910 and/or Ser-935 facilitates interaction with SFN. In terms of processing, ubiquitinated by TRIM1; undergoes 'Lys-48'-linked polyubiquitination leading to proteasomal degradation. As to expression, expressed in the brain (at protein level). Detected throughout the adult brain. Expressed in deep cerebral cortex layers, superficial cingulate cortex layers, the piriform cortex, hippocampal formation, caudate putamen, substantia nigra, the basolateral and basomedial anterior amygdala nuclei, reticular thalamic nucleus and also in the cerebellar granular cell layer. Highly expressed in the striatum, cortex and olfactory tubercle. Little or no expression in the substantia nigra, where dopaminergic neurons preferentially degenerate in Parkinson disease. Expression is particularly high in brain dopaminoceptive areas. High and strikingly specific expression in striatum and parts of cortex and no signals in dopamine neurons.

It is found in the cytoplasmic vesicle. It localises to the perikaryon. The protein resides in the cell projection. The protein localises to the axon. Its subcellular location is the dendrite. It is found in the golgi apparatus membrane. It localises to the endoplasmic reticulum membrane. The protein resides in the secretory vesicle. The protein localises to the synaptic vesicle membrane. Its subcellular location is the endosome. It is found in the lysosome. It localises to the mitochondrion outer membrane. The protein resides in the cytoplasm. The protein localises to the cytoskeleton. Its subcellular location is the phagosome. The enzyme catalyses L-threonyl-[protein] + ATP = O-phospho-L-threonyl-[protein] + ADP + H(+). The catalysed reaction is L-seryl-[protein] + ATP = O-phospho-L-seryl-[protein] + ADP + H(+). It carries out the reaction GTP + H2O = GDP + phosphate + H(+). Its activity is regulated as follows. Kinase activity is regulated by the GTPase activity of the ROC domain. GTP-bound LRRK2 kinase activity is stimulated by RAB29. Phosphorylation of RAB10 'Thr-73' is stimulated by RAB29 and RAB32. Inhibited by small molecule inhibitors MLi-2 and LRRK2-IN-1. Its function is as follows. Serine/threonine-protein kinase which phosphorylates a broad range of proteins involved in multiple processes such as neuronal plasticity, innate immunity, autophagy, and vesicle trafficking. Is a key regulator of RAB GTPases by regulating the GTP/GDP exchange and interaction partners of RABs through phosphorylation. Phosphorylates RAB3A, RAB3B, RAB3C, RAB3D, RAB8A, RAB8B, RAB10, RAB12, RAB29, RAB35, and RAB43. Regulates the RAB3IP-catalyzed GDP/GTP exchange for RAB8A through the phosphorylation of 'Thr-72' on RAB8A. Inhibits the interaction between RAB8A and GDI1 and/or GDI2 by phosphorylating 'Thr-72' on RAB8A. Regulates primary ciliogenesis through phosphorylation of RAB8A and RAB10, which promotes SHH signaling in the brain. Together with RAB29, plays a role in the retrograde trafficking pathway for recycling proteins, such as mannose-6-phosphate receptor (M6PR), between lysosomes and the Golgi apparatus in a retromer-dependent manner. Regulates neuronal process morphology in the intact central nervous system (CNS). Plays an important role in recruiting SEC16A to endoplasmic reticulum exit sites (ERES) and in regulating ER to Golgi vesicle-mediated transport and ERES organization. Positively regulates autophagy through a calcium-dependent activation of the CaMKK/AMPK signaling pathway. The process involves activation of nicotinic acid adenine dinucleotide phosphate (NAADP) receptors, increase in lysosomal pH, and calcium release from lysosomes. Phosphorylates PRDX3. By phosphorylating APP on 'Thr-743', which promotes the production and the nuclear translocation of the APP intracellular domain (AICD), regulates dopaminergic neuron apoptosis. Acts as a positive regulator of innate immunity by mediating phosphorylation of RIPK2 downstream of NOD1 and NOD2, thereby enhancing RIPK2 activation. Independent of its kinase activity, inhibits the proteasomal degradation of MAPT, thus promoting MAPT oligomerization and secretion. In addition, has GTPase activity via its Roc domain which regulates LRKK2 kinase activity. Recruited by RAB29/RAB7L1 to overloaded lysosomes where it phosphorylates and stabilizes RAB8A and RAB10 which promote lysosomal content release and suppress lysosomal enlargement through the EHBP1 and EHBP1L1 effector proteins. The sequence is that of Leucine-rich repeat serine/threonine-protein kinase 2 (Lrrk2) from Mus musculus (Mouse).